Reading from the N-terminus, the 292-residue chain is 5,10-methylenetetrahydrofolate reductase (292 aa).

The active-site Proton donor/acceptor is the Glu28. Position 59 (Thr59) interacts with NADH. 13 residues coordinate FAD: Tyr60, Ala62, His88, Arg118, Gly119, Asp120, Ala132, Tyr152, His156, Asp165, Asn168, Lys171, and Lys172. Position 120 (Asp120) interacts with (6S)-5-methyl-5,6,7,8-tetrahydrofolate. Gln183 is a binding site for NADH. (6S)-5-methyl-5,6,7,8-tetrahydrofolate is bound by residues Gln183, Gln219, and Lys279.

This sequence belongs to the methylenetetrahydrofolate reductase family. It depends on FAD as a cofactor.

It carries out the reaction (6S)-5-methyl-5,6,7,8-tetrahydrofolate + NAD(+) = (6R)-5,10-methylene-5,6,7,8-tetrahydrofolate + NADH + H(+). The protein operates within one-carbon metabolism; tetrahydrofolate interconversion. It functions in the pathway amino-acid biosynthesis; L-methionine biosynthesis via de novo pathway. Functionally, catalyzes the NADH-dependent reduction of 5,10-methylenetetrahydrofolate to 5-methyltetrahydrofolate. Is required to provide the methyl group necessary for methionine synthetase to convert homocysteine to methionine; the methyl group is given by 5-methyltetrahydrofolate. The polypeptide is 5,10-methylenetetrahydrofolate reductase (metF) (Buchnera aphidicola subsp. Schizaphis graminum (strain Sg)).